The following is a 218-amino-acid chain: Ribose-5-phosphate isomerase A (218 aa).

Substrate-binding positions include 28–31 (TGST), 81–84 (DGAD), and 94–97 (KGGG). The active-site Proton acceptor is glutamate 103. Lysine 121 lines the substrate pocket.

This sequence belongs to the ribose 5-phosphate isomerase family. As to quaternary structure, homodimer.

The catalysed reaction is aldehydo-D-ribose 5-phosphate = D-ribulose 5-phosphate. It functions in the pathway carbohydrate degradation; pentose phosphate pathway; D-ribose 5-phosphate from D-ribulose 5-phosphate (non-oxidative stage): step 1/1. In terms of biological role, catalyzes the reversible conversion of ribose-5-phosphate to ribulose 5-phosphate. This Aliivibrio fischeri (strain ATCC 700601 / ES114) (Vibrio fischeri) protein is Ribose-5-phosphate isomerase A.